The following is a 209-amino-acid chain: rRNA N(6)-adenosine-methyltransferase METTL5 (209 aa).

S-adenosyl-L-methionine-binding positions include Q28, T31, G59, C62, V64, D81, and 108-109 (DV).

This sequence belongs to the methyltransferase superfamily. PrmA family. In terms of assembly, heterodimer; heterodimerizes with TRMT112. In terms of tissue distribution, expressed from very early development (8 post-conceptual weeks) and expression persists through adulthood in multiple substructures of the brain, including the cerebellar cortex, hippocampus, and striatum.

It is found in the nucleus. The protein localises to the presynapse. Its subcellular location is the postsynapse. It carries out the reaction adenosine(1832) in 18S rRNA + S-adenosyl-L-methionine = N(6)-methyladenosine(1832) in 18S rRNA + S-adenosyl-L-homocysteine + H(+). With respect to regulation, rRNA N6-adenosine-methyltransferase activity is inhibited by zinc. Catalytic subunit of a heterodimer with TRMT112, which specifically methylates the 6th position of adenine in position 1832 of 18S rRNA. N6-methylation of adenine(1832) in 18S rRNA resides in the decoding center of 18S rRNA and is required for translation and embryonic stem cells (ESCs) pluripotency and differentiation. In Homo sapiens (Human), this protein is rRNA N(6)-adenosine-methyltransferase METTL5.